A 170-amino-acid polypeptide reads, in one-letter code: Transmembrane protein 252 (170 aa).

2 helical membrane-spanning segments follow: residues 8-28 (ILCA…AFFI) and 40-60 (LIAA…GIFW). Residues 112–147 (CPAEREASGIPPPLYTETGLEFQDGNDSHPEAPPSY) are disordered.

Its subcellular location is the membrane. This chain is Transmembrane protein 252 (TMEM252), found in Homo sapiens (Human).